The primary structure comprises 249 residues: Cytoplasmic envelopment protein 1 (249 aa).

It belongs to the herpesviridae cytoplasmic envelopment protein 1 family.

It is found in the virion. Its subcellular location is the virion tegument. It localises to the host cytoplasm. The protein localises to the host Golgi apparatus. Functionally, plays a critical role in cytoplasmic virus egress. Participates in the final step of tegumentation and envelope acquisition within the host cytoplasm. The sequence is that of Cytoplasmic envelopment protein 1 (UL103) from Homo sapiens (Human).